Here is a 95-residue protein sequence, read N- to C-terminus: Large ribosomal subunit protein bL28 (95 aa).

The interval Met1 to Gln28 is disordered.

This sequence belongs to the bacterial ribosomal protein bL28 family.

The sequence is that of Large ribosomal subunit protein bL28 from Magnetococcus marinus (strain ATCC BAA-1437 / JCM 17883 / MC-1).